A 357-amino-acid polypeptide reads, in one-letter code: MFSCKQHLSLGACVFCLGLLASTPFIWCFVFANLLSLEIFSPWQTHVYRLGFPTACLMAVLWTLVPAKHAVRAVTPAIMLNIASALIFFSLRVYSTSTWVSAPCLFLANLPLLCLWPRLAIEIVYICPAIHQRFFELGLLLACTIFALSVVSRALEVSAVFMSPFFIFLALGSGSLAGARRNQIYTSGLERRRSIFCARGDHSVASLKETLHKCPWDLLAISALTVLVVCVMIVLHVHAEVFFGLSRYLPLFLCGAMASGGLYLGHSSIIACVMATLCTLTSVVVYFLHETLGPLGKTVLFISIFVYYFSGVAALSAAMRYKLKKFVNGPLVHLRVVYMCCFVFTFCEYLLVTFIKS.

Residues 1–11 are Virion surface-facing; it reads MFSCKQHLSLG. A transmembrane helix spans residues 12-32; sequence ACVFCLGLLASTPFIWCFVFA. The Virion surface portion of the chain corresponds to 33 to 46; the sequence is NLLSLEIFSPWQTH. At 47 to 67 the chain is embedded in the membrane; the sequence is VYRLGFPTACLMAVLWTLVPA. The Virion surface segment spans residues 68–70; the sequence is KHA. Residues 71 to 91 are membrane-embedded; sequence VRAVTPAIMLNIASALIFFSL. Residues 92–98 lie on the Virion surface side of the membrane; that stretch reads RVYSTST. At 99 to 121 the chain is embedded in the membrane; the sequence is WVSAPCLFLANLPLLCLWPRLAI. Over 122 to 133 the chain is Virion surface; sequence EIVYICPAIHQR. A transmembrane helix spans residues 134–154; sequence FFELGLLLACTIFALSVVSRA. Topologically, residues 155–158 are virion surface; it reads LEVS. Positions 159–179 form a transmembrane segment; that stretch reads AVFMSPFFIFLALGSGSLAGA. Residues 180–217 are Virion surface-facing; sequence RRNQIYTSGLERRRSIFCARGDHSVASLKETLHKCPWD. Residues 199–201 carry the Integrin binding site motif; sequence RGD. The chain crosses the lipid bilayer at residues 218–238; that stretch reads LLAISALTVLVVCVMIVLHVH. The Virion surface segment spans residues 239–240; the sequence is AE. A transmembrane helix spans residues 241–261; sequence VFFGLSRYLPLFLCGAMASGG. Topologically, residues 262–267 are virion surface; sequence LYLGHS. Over 268–288 the chain traverses the membrane; it reads SIIACVMATLCTLTSVVVYFL. The Virion surface portion of the chain corresponds to 289–298; it reads HETLGPLGKT. Over 299-319 the chain traverses the membrane; the sequence is VLFISIFVYYFSGVAALSAAM. The Virion surface segment spans residues 320 to 335; sequence RYKLKKFVNGPLVHLR. Over 336–356 the chain traverses the membrane; sequence VVYMCCFVFTFCEYLLVTFIK. A topological domain (virion surface) is located at residue S357.

It belongs to the herpesviridae BMRF2 family. As to quaternary structure, interacts with BDLF2. Interacts with host beta1 integrin family. Post-translationally, extensively glycosylated by O-linked oligosaccharides.

The protein localises to the virion membrane. It is found in the host cell membrane. In terms of biological role, facilitates virus attachment to oral epithelial cells by binding to host beta1 integrin family. Participates in rearrangement of cellular actin to increase intercellular contacts by binding BDLF2 and thereby promote virus cell-to-cell spreading. The sequence is that of Protein BMRF2 from Homo sapiens (Human).